Here is a 542-residue protein sequence, read N- to C-terminus: MTTQIPVPPVVSDQALPDRISDRLKGQIIVILDFGSQYSELIARRIRETEVYSEVLSYRTTAQQLREIKPKGIILSGGPNSVYDQGAPECDPEIFQLGVPVLGVCYGMQLMVKQLGGRVERAKRGEYGKASLHIDDPTDLLTNVENDSTMWMSHGDSCVDLPTGFEILAHTDNTPCAAIADHQKALFGVQFHPEVVHSVGGIALIRNFVYHICHCEPTWTTAAFIEESIREVRSQVGDRRVLLALSGGVDSSTLAFLLHRAIGDNLTCMFIDQGFMRKGEPERLVELFDHQFHIPVQYVNARDRFLKQLEGVTDPEEKRRLIGHEFIQVFEEESNRLGPFDYLAQGTLYPDVIESADSNVDPKTGERVAVKIKSHHNVGGLPKNLRFKLVEPLRKLFKDEVRKLGRSIGLPEEIVRRHPFPGPGLAIRIIGEVTSERLNILRDADFIVRDEISKRGIYHDYWQAFAVLLPIRSVGVMGDKRTYAHPVVLRFITSEDGMTADWARVPYDILEAISNRIVNEVKGVNRVVYDITSKPPGTIEWE.

A Glutamine amidotransferase type-1 domain is found at 28-218 (IIVILDFGSQ…VYHICHCEPT (191 aa)). The active-site Nucleophile is the C105. Active-site residues include H192 and E194. A GMPS ATP-PPase domain is found at 219–417 (WTTAAFIEES…IGLPEEIVRR (199 aa)). 246 to 252 (SGGVDSS) contributes to the ATP binding site.

In terms of assembly, homodimer.

The catalysed reaction is XMP + L-glutamine + ATP + H2O = GMP + L-glutamate + AMP + diphosphate + 2 H(+). It functions in the pathway purine metabolism; GMP biosynthesis; GMP from XMP (L-Gln route): step 1/1. Functionally, catalyzes the synthesis of GMP from XMP. This chain is GMP synthase [glutamine-hydrolyzing] (guaA), found in Synechocystis sp. (strain ATCC 27184 / PCC 6803 / Kazusa).